A 487-amino-acid polypeptide reads, in one-letter code: L-tartrate/succinate antiporter (487 aa).

Helical transmembrane passes span 10 to 30 (YLAP…AGLE), 33 to 53 (TWLY…EPVP), 54 to 74 (GAVV…WLLF), 93 to 113 (WAVS…FMFG), 137 to 157 (TLFL…VTPS), 189 to 209 (IGSY…AIFL), 236 to 256 (FLGM…LAYV), 292 to 312 (LMVG…AAMV), 313 to 333 (GYSV…DIVS), 340 to 360 (VFFW…TGFI), 370 to 390 (SLSG…FYLL), 393 to 413 (FFAS…AAAL), 418 to 438 (IPLP…SILT), and 465 to 485 (IFGL…MPVV).

Belongs to the SLC13A/DASS transporter (TC 2.A.47) family. DIT1 subfamily.

The protein resides in the cell inner membrane. It carries out the reaction (2R,3R)-tartrate(out) + succinate(in) = (2R,3R)-tartrate(in) + succinate(out). Functionally, catalyzes the uptake of tartrate in exchange for intracellular succinate. Essential for anaerobic L-tartrate fermentation. The sequence is that of L-tartrate/succinate antiporter (ttdT) from Shigella flexneri.